The primary structure comprises 830 residues: Lon protease (830 aa).

Residues 1–28 form a disordered region; the sequence is MTFDTNDDSIAKNSLAPYNQETEQQQEE. The 196-residue stretch at 50-245 folds into the Lon N-terminal domain; it reads IPILPLRDVV…LVITHLTHEA (196 aa). Residue 397-404 participates in ATP binding; sequence GPPGVGKT. One can recognise a Lon proteolytic domain in the interval 633–814; that stretch reads TLPPGVALGL…DEVLPLAFSE (182 aa). Residues Ser-720 and Lys-763 contribute to the active site.

The protein belongs to the peptidase S16 family. As to quaternary structure, homohexamer. Organized in a ring with a central cavity.

It is found in the cytoplasm. It carries out the reaction Hydrolysis of proteins in presence of ATP.. Functionally, ATP-dependent serine protease that mediates the selective degradation of mutant and abnormal proteins as well as certain short-lived regulatory proteins. Required for cellular homeostasis and for survival from DNA damage and developmental changes induced by stress. Degrades polypeptides processively to yield small peptide fragments that are 5 to 10 amino acids long. Binds to DNA in a double-stranded, site-specific manner. In Lawsonia intracellularis (strain PHE/MN1-00), this protein is Lon protease.